The primary structure comprises 546 residues: Probable protein kinase UbiB (546 aa).

Residues 124 to 502 (DFEIKPLASA…HVRQGQSRYF (379 aa)) form the Protein kinase domain. Residues 130 to 138 (LASASIAQV) and Lys153 each bind ATP. Catalysis depends on Asp288, which acts as the Proton acceptor. 2 helical membrane-spanning segments follow: residues 501–521 (YFLGIGATLVLSGTFLLVSRP) and 522–542 (EWGLMPGWLMAGGLIAWFVGW).

The protein belongs to the ABC1 family. UbiB subfamily.

Its subcellular location is the cell inner membrane. The protein operates within cofactor biosynthesis; ubiquinone biosynthesis [regulation]. Its function is as follows. Is probably a protein kinase regulator of UbiI activity which is involved in aerobic coenzyme Q (ubiquinone) biosynthesis. The protein is Probable protein kinase UbiB of Escherichia coli O45:K1 (strain S88 / ExPEC).